We begin with the raw amino-acid sequence, 321 residues long: Glucokinase (321 aa).

9–14 (ADIGGT) is an ATP binding site.

It belongs to the bacterial glucokinase family.

It is found in the cytoplasm. It catalyses the reaction D-glucose + ATP = D-glucose 6-phosphate + ADP + H(+). The sequence is that of Glucokinase from Saccharophagus degradans (strain 2-40 / ATCC 43961 / DSM 17024).